Reading from the N-terminus, the 238-residue chain is Probable transcriptional regulatory protein CT_457 (238 aa).

Residues 1-21 (MAGHSKWANTKHRKERADHKK) are disordered. Residues 9–21 (NTKHRKERADHKK) are compositionally biased toward basic residues.

Belongs to the TACO1 family.

It localises to the cytoplasm. This chain is Probable transcriptional regulatory protein CT_457, found in Chlamydia trachomatis serovar D (strain ATCC VR-885 / DSM 19411 / UW-3/Cx).